The primary structure comprises 722 residues: D-(-)-3-hydroxybutyrate oligomer hydrolase (722 aa).

An N-terminal signal peptide occupies residues 1 to 25 (MKTMQGKGSGRRLRGALLVTMAASG). S319 serves as the catalytic Charge relay system.

It belongs to the D-(-)-3-hydroxybutyrate oligomer hydrolase family.

It localises to the secreted. It catalyses the reaction (3R)-hydroxybutanoate dimer + H2O = 2 (R)-3-hydroxybutanoate + H(+). The protein operates within lipid metabolism; butanoate metabolism. Inhibited by diisopropylfluorophosphate (DFP). In terms of biological role, participates in the degradation of poly-3-hydroxybutyrate (PHB). It works downstream of poly(3-hydroxybutyrate) depolymerase, hydrolyzing D(-)-3-hydroxybutyrate oligomers of various length (3HB-oligomers) into 3HB-monomers. This Ralstonia pickettii (Burkholderia pickettii) protein is D-(-)-3-hydroxybutyrate oligomer hydrolase.